The primary structure comprises 239 residues: DnaA regulatory inactivator Hda (239 aa).

It belongs to the DnaA family. HdA subfamily. In terms of assembly, the active form seems to be an ADP-bound monomer. Forms the RIDA complex (regulatory inactivation of DnaA) of ATP-DnaA, ADP-Hda and the DNA-loaded beta sliding clamp (dnaN).

Functionally, mediates the interaction of DNA replication initiator protein DnaA with DNA polymerase subunit beta sliding clamp (dnaN). Stimulates hydrolysis of ATP-DnaA to ADP-DnaA, rendering DnaA inactive for reinitiation, a process called regulatory inhibition of DnaA or RIDA. The sequence is that of DnaA regulatory inactivator Hda from Yersinia pseudotuberculosis serotype O:1b (strain IP 31758).